A 373-amino-acid polypeptide reads, in one-letter code: Putative gustatory receptor 10b (373 aa).

Residues 1–8 (MRVGKLCR) are Cytoplasmic-facing. Residues 9–29 (LALRFWMGLILVLGFSSHYYN) form a helical membrane-spanning segment. Residues 30 to 82 (PTRRRLVYSRILQTYDWLLMVINLGAFYLYYRYAMTYFLEGMFRRQGFVNQVS) lie on the Extracellular side of the membrane. The chain crosses the membrane as a helical span at residues 83 to 103 (TCNVFQQLLMAVTGTWLHFLF). Over 104–132 (ERHVCQTYNELSRILKHDLKLKEHSRFYC) the chain is Cytoplasmic. A helical transmembrane segment spans residues 133 to 153 (LAFLAKVYNFFHNFNFALSAI). Topologically, residues 154-170 (MHWGLRPFNVWDLLANL) are extracellular. The helical transmembrane segment at 171-191 (YFVYNSLARDAILVAYVLLLL) threads the bilayer. The Cytoplasmic segment spans residues 192-230 (NLSEALRLNGQQEHDTYSDLMKQLRRRERLLRIGRRVHR). A helical membrane pass occupies residues 231 to 251 (MFAWLVAIALIYLVFFNTATI). Topologically, residues 252 to 273 (YLGYTMFIQKHDALGLRGRGLK) are extracellular. A helical membrane pass occupies residues 274–294 (MLLTVVSFLVILWDVVLLQVI). Residues 295 to 350 (CEKLLAEENKICDCPEDVASSRTTYRQWEMSALRRAITRSSPENNVLGMFRMDMRC) lie on the Cytoplasmic side of the membrane. Residues 351-371 (AFALISCSLSYGIIIIQIGYI) form a helical membrane-spanning segment. Topologically, residues 372 to 373 (PG) are extracellular.

This sequence belongs to the insect chemoreceptor superfamily. Gustatory receptor (GR) family. Gr10a subfamily.

Its subcellular location is the cell membrane. Its function is as follows. Probable gustatory receptor which mediates acceptance or avoidance behavior, depending on its substrates. The sequence is that of Putative gustatory receptor 10b (Gr10b) from Drosophila melanogaster (Fruit fly).